Reading from the N-terminus, the 497-residue chain is tRNA-2-methylthio-N(6)-dimethylallyladenosine synthase (497 aa).

Residues 1–50 (MTGTSNIPTHGKEHKDAPALLPLPAPNPHHTHAAHPGDPSHDRPPSRGKL) are disordered. The MTTase N-terminal domain occupies 48–165 (GKLFIKTHGC…LPDMIRARRE (118 aa)). [4Fe-4S] cluster-binding residues include Cys-57, Cys-94, Cys-128, Cys-202, Cys-206, and Cys-209. A Radical SAM core domain is found at 188 to 430 (RAEGPSAFVS…QKHINAYAAD (243 aa)). The TRAM domain occupies 433–496 (KRMIGTVQTV…TNSLRGRVHT (64 aa)).

Belongs to the methylthiotransferase family. MiaB subfamily. As to quaternary structure, monomer. Requires [4Fe-4S] cluster as cofactor.

It is found in the cytoplasm. It carries out the reaction N(6)-dimethylallyladenosine(37) in tRNA + (sulfur carrier)-SH + AH2 + 2 S-adenosyl-L-methionine = 2-methylsulfanyl-N(6)-dimethylallyladenosine(37) in tRNA + (sulfur carrier)-H + 5'-deoxyadenosine + L-methionine + A + S-adenosyl-L-homocysteine + 2 H(+). Functionally, catalyzes the methylthiolation of N6-(dimethylallyl)adenosine (i(6)A), leading to the formation of 2-methylthio-N6-(dimethylallyl)adenosine (ms(2)i(6)A) at position 37 in tRNAs that read codons beginning with uridine. This Xylella fastidiosa (strain M12) protein is tRNA-2-methylthio-N(6)-dimethylallyladenosine synthase.